A 2172-amino-acid polypeptide reads, in one-letter code: DExH-box ATP-dependent RNA helicase DExH13 (2172 aa).

The tract at residues 20-83 is disordered; that stretch reads YKVNSSLVLN…KSKKKKERCD (64 aa). Basic and acidic residues predominate over residues 30 to 73; it reads SDERRRDTHESSGEPESLRGRIDPKSFGDRVVRGRPHELDERLN. Residues 515-698 form the Helicase ATP-binding 1 domain; sequence GTALFKADNI…FLRVDLKNGL (184 aa). 528–535 provides a ligand contact to ATP; sequence APTGAGKT. A DEIH box motif is present at residues 640–643; sequence DEIH. The Helicase C-terminal 1 domain occupies 742-946; sequence GKHQVLIFVH…NAREACHWLG (205 aa). The 302-residue stretch at 1007 to 1308 folds into the SEC63 1 domain; the sequence is TDLGRIASYY…KWLDSPTVLP (302 aa). Residues 1361-1538 form the Helicase ATP-binding 2 domain; it reads TVLYNTSDNV…WIGASSCGVF (178 aa). 1374–1381 serves as a coordination point for ATP; sequence APTGSGKT. The DELH box signature appears at 1480–1483; sequence DELH. The region spanning 1575-1772 is the Helicase C-terminal 2 domain; sequence AIVQHAKNKK…NFNAEVVARV (198 aa). The region spanning 1840-2157 is the SEC63 2 domain; the sequence is PLNLGMIASY…YLGCDQEYSF (318 aa).

Its subcellular location is the nucleus. It catalyses the reaction ATP + H2O = ADP + phosphate + H(+). In terms of biological role, RNA helicase that plays an essential role in pre-mRNA splicing as component of the U5 snRNP and U4/U6-U5 tri-snRNP complexes. Involved in spliceosome assembly, activation and disassembly. This chain is DExH-box ATP-dependent RNA helicase DExH13, found in Arabidopsis thaliana (Mouse-ear cress).